An 88-amino-acid polypeptide reads, in one-letter code: DASH complex subunit HSK3 (88 aa).

The segment covering 1 to 15 has biased composition (low complexity); the sequence is MSSRGSGANAASRQS. Residues 1–24 form a disordered region; that stretch reads MSSRGSGANAASRQSMTASGGAVK.

The protein belongs to the DASH complex HSK3 family. In terms of assembly, component of the DASH complex consisting of ASK1, DAD1, DAD2, DAD3, DAD4, DAM1, DUO1, HSK3, SPC19 and SPC34, with a stoichiometry of one copy of each subunit per complex. Multiple DASH complexes oligomerize to form a ring that encircles spindle microtubules and organizes the rod-like NDC80 complexes of the outer kinetochore. DASH complex oligomerization strengthens microtubule attachments. On cytoplasmic microtubules, DASH complexes appear to form patches instead of rings.

The protein resides in the nucleus. Its subcellular location is the cytoplasm. The protein localises to the cytoskeleton. It is found in the spindle. It localises to the chromosome. The protein resides in the centromere. Its subcellular location is the kinetochore. Its function is as follows. Component of the DASH complex that connects microtubules with kinetochores and couples microtubule depolymerisation to chromosome movement; it is involved in retrieving kinetochores to the spindle poles before their re-orientation on the spindle in early mitosis and allows microtubule depolymerization to pull chromosomes apart and resist detachment during anaphase. Kinetochores, consisting of a centromere-associated inner segment and a microtubule-contacting outer segment, play a crucial role in chromosome segregation by mediating the physical connection between centromeric DNA and microtubules. Kinetochores also serve as an input point for the spindle assembly checkpoint, which delays anaphase until all chromosomes have bioriented on the mitotic spindle. The chain is DASH complex subunit HSK3 from Chaetomium thermophilum (strain DSM 1495 / CBS 144.50 / IMI 039719) (Thermochaetoides thermophila).